The chain runs to 94 residues: Co-chaperonin GroES (94 aa).

Belongs to the GroES chaperonin family. Heptamer of 7 subunits arranged in a ring. Interacts with the chaperonin GroEL.

The protein localises to the cytoplasm. Functionally, together with the chaperonin GroEL, plays an essential role in assisting protein folding. The GroEL-GroES system forms a nano-cage that allows encapsulation of the non-native substrate proteins and provides a physical environment optimized to promote and accelerate protein folding. GroES binds to the apical surface of the GroEL ring, thereby capping the opening of the GroEL channel. The polypeptide is Co-chaperonin GroES (Alkaliphilus oremlandii (strain OhILAs) (Clostridium oremlandii (strain OhILAs))).